Consider the following 503-residue polypeptide: Zinc metalloproteinase nas-14 (503 aa).

Residues 1-25 (MRLLYSLFHCSAFLVGFTLSVGVLP) form the signal peptide. One can recognise a Peptidase M12A domain in the interval 116–312 (NLVTYPDKLW…KKVNKLYQCG (197 aa)). 2 cysteine pairs are disulfide-bonded: Cys158–Cys311 and Cys182–Cys202. N-linked (GlcNAc...) asparagine glycosylation occurs at Asn192. A Zn(2+)-binding site is contributed by His210. Glu211 is a catalytic residue. Zn(2+)-binding residues include His214 and His220. Residues 317–340 (TSSTTTTTTTTTTTTTTEEPTTTT) are compositionally biased toward low complexity. Residues 317-377 (TSSTTTTTTT…TPKPVERSRN (61 aa)) are disordered. The span at 342–351 (VEEKPKDKKV) shows a compositional bias: basic and acidic residues. Low complexity predominate over residues 352–370 (SSTTTTTKKPTTTTTTTPK). 3 disulfide bridges follow: Cys380–Cys414, Cys387–Cys407, and Cys396–Cys411. Residues 380-414 (CEDLNAHCGMWEQLGHCQHSVKYMAHYCRKACNLC) form the ShKT 1 domain. The disordered stretch occupies residues 422-464 (TTTTPKPVPRNKEKENKSASSTTRGTSTATSTTPKTTTTTTSA). Residue Asn437 is glycosylated (N-linked (GlcNAc...) asparagine). A compositionally biased stretch (low complexity) spans 439-464 (SASSTTRGTSTATSTTPKTTTTTTSA). 3 cysteine pairs are disulfide-bonded: Cys469–Cys503, Cys476–Cys496, and Cys485–Cys500. A ShKT 2 domain is found at 469 to 503 (CEDKNLFCSYWAKIGECNSESKFMKIFCKASCGKC).

Requires Zn(2+) as cofactor. As to expression, expressed in pharyngeal muscles and mc cells.

Its subcellular location is the secreted. Functionally, metalloprotease. In Caenorhabditis elegans, this protein is Zinc metalloproteinase nas-14 (nas-14).